The following is a 279-amino-acid chain: Movement protein (279 aa).

It belongs to the cucumovirus movement protein family.

The protein resides in the host cell junction. The protein localises to the host plasmodesma. Functionally, transports viral genome to neighboring plant cells directly through plasmosdesmata, without any budding. The movement protein allows efficient cell to cell propagation, by bypassing the host cell wall barrier. Acts by forming a tubular structure at the host plasmodesmata, enlarging it enough to allow free passage of virion capsids. This Cucumber mosaic virus (strain Ixora) (CMV) protein is Movement protein.